Here is a 300-residue protein sequence, read N- to C-terminus: ADP,ATP carrier protein 2 (300 aa).

3 Solcar repeats span residues 8–100 (VAFI…YKQV), 113–203 (RYFI…ARGM), and 214–299 (VSWA…IKKV). The next 5 helical transmembrane spans lie at 10–39 (FIKD…LLLQ), 77–101 (LANV…KQVF), 112–132 (TRYF…SLCF), 181–201 (VSVQ…DTAR), and 213–233 (YVSW…SYPF). 2 residues coordinate ADP: R82 and K94. ADP is bound at residue R237. Residues 237 to 242 (RRRMMM) form an important for transport activity region. The short motif at 237–242 (RRRMMM) is the Nucleotide carrier signature motif element. A helical transmembrane segment spans residues 276–293 (AFSNVLRGTGGAFVLVLY).

Belongs to the mitochondrial carrier (TC 2.A.29) family. Monomer.

It localises to the mitochondrion inner membrane. The enzyme catalyses ADP(in) + ATP(out) = ADP(out) + ATP(in). Its activity is regulated as follows. The matrix-open state (m-state) is inhibited by the membrane-permeable bongkrekic acid (BKA). The cytoplasmic-open state (c-state) is inhibited by the membrane-impermeable toxic inhibitor carboxyatractyloside (CATR). Its function is as follows. ADP:ATP antiporter that mediates import of ADP into the mitochondrial matrix for ATP synthesis, and export of ATP out to fuel the cell. Cycles between the cytoplasmic-open state (c-state) and the matrix-open state (m-state): operates by the alternating access mechanism with a single substrate-binding site intermittently exposed to either the cytosolic (c-state) or matrix (m-state) side of the inner mitochondrial membrane. The sequence is that of ADP,ATP carrier protein 2 from Anopheles gambiae (African malaria mosquito).